A 186-amino-acid polypeptide reads, in one-letter code: C-type lectin domain family 19 member A (186 aa).

An N-terminal signal peptide occupies residues 1 to 19; the sequence is MQRWTLWAAAFLTLHSAQA. Residues 47–179 enclose the C-type lectin domain; that stretch reads FKGHCYRFFP…CSRKFPFVCK (133 aa). A glycan (N-linked (GlcNAc...) asparagine) is linked at Asn58. 2 disulfides stabilise this stretch: Cys68–Cys178 and Cys151–Cys170.

It is found in the secreted. The protein is C-type lectin domain family 19 member A of Homo sapiens (Human).